A 280-amino-acid polypeptide reads, in one-letter code: Energy-coupling factor transporter ATP-binding protein EcfA1 (280 aa).

In terms of domain architecture, ABC transporter spans Leu6 to Asp241. Gly40–Ser47 is a binding site for ATP.

The protein belongs to the ABC transporter superfamily. Energy-coupling factor EcfA family. As to quaternary structure, forms a stable energy-coupling factor (ECF) transporter complex composed of 2 membrane-embedded substrate-binding proteins (S component), 2 ATP-binding proteins (A component) and 2 transmembrane proteins (T component).

It is found in the cell membrane. Its function is as follows. ATP-binding (A) component of a common energy-coupling factor (ECF) ABC-transporter complex. Unlike classic ABC transporters this ECF transporter provides the energy necessary to transport a number of different substrates. This chain is Energy-coupling factor transporter ATP-binding protein EcfA1, found in Bacillus cereus (strain ATCC 14579 / DSM 31 / CCUG 7414 / JCM 2152 / NBRC 15305 / NCIMB 9373 / NCTC 2599 / NRRL B-3711).